The chain runs to 505 residues: Exodeoxyribonuclease 7 large subunit (505 aa).

The disordered stretch occupies residues serine 466–phenylalanine 505. Positions alanine 480–proline 497 are enriched in pro residues.

This sequence belongs to the XseA family. In terms of assembly, heterooligomer composed of large and small subunits.

Its subcellular location is the cytoplasm. The enzyme catalyses Exonucleolytic cleavage in either 5'- to 3'- or 3'- to 5'-direction to yield nucleoside 5'-phosphates.. In terms of biological role, bidirectionally degrades single-stranded DNA into large acid-insoluble oligonucleotides, which are then degraded further into small acid-soluble oligonucleotides. The sequence is that of Exodeoxyribonuclease 7 large subunit from Caulobacter vibrioides (strain NA1000 / CB15N) (Caulobacter crescentus).